The primary structure comprises 227 residues: tRNA (guanine-N(1)-)-methyltransferase (227 aa).

Residues Gly110 and 129–134 (IGDYVL) contribute to the S-adenosyl-L-methionine site.

The protein belongs to the RNA methyltransferase TrmD family. Homodimer.

It is found in the cytoplasm. The enzyme catalyses guanosine(37) in tRNA + S-adenosyl-L-methionine = N(1)-methylguanosine(37) in tRNA + S-adenosyl-L-homocysteine + H(+). Specifically methylates guanosine-37 in various tRNAs. The polypeptide is tRNA (guanine-N(1)-)-methyltransferase (Mycoplasmopsis agalactiae (strain NCTC 10123 / CIP 59.7 / PG2) (Mycoplasma agalactiae)).